We begin with the raw amino-acid sequence, 89 residues long: Glutamyl-tRNA(Gln) amidotransferase subunit C (89 aa).

The protein belongs to the GatC family. In terms of assembly, heterotrimer of A, B and C subunits.

It catalyses the reaction L-glutamyl-tRNA(Gln) + L-glutamine + ATP + H2O = L-glutaminyl-tRNA(Gln) + L-glutamate + ADP + phosphate + H(+). It carries out the reaction L-aspartyl-tRNA(Asn) + L-glutamine + ATP + H2O = L-asparaginyl-tRNA(Asn) + L-glutamate + ADP + phosphate + 2 H(+). Allows the formation of correctly charged Asn-tRNA(Asn) or Gln-tRNA(Gln) through the transamidation of misacylated Asp-tRNA(Asn) or Glu-tRNA(Gln) in organisms which lack either or both of asparaginyl-tRNA or glutaminyl-tRNA synthetases. The reaction takes place in the presence of glutamine and ATP through an activated phospho-Asp-tRNA(Asn) or phospho-Glu-tRNA(Gln). In Thermus thermophilus (strain ATCC 27634 / DSM 579 / HB8), this protein is Glutamyl-tRNA(Gln) amidotransferase subunit C.